The following is a 2059-amino-acid chain: MRIIAGSTNQNDPKYGPRAGKQCMSNCFSFLHTVYLNGINNVLNKESIDIIMENGALLDNISTTTLKLETGNIPEYRFFTEIPKKISSNFGETIHELSRPFNGTLESQHIDNEVYLGLLDFLLYGKNKKPAFIVITIGVMARAIFIVDELFYLFDSHASDTENSAAIYICEDIDELYALLAIENVAEFYYDAVFSYFIETTDLSLEDGDATILILKTYKDPDIALSLNDFLTMYSSTSSTKTAETNTLISKQSPSKRKQEKTSLNSNSLEKKRKQGSSLKYYNNEVDLVPSFYELRPQFNNILFELSNFPIVKENVNWTLYIQKFATKSTQPFTKPFIWNRVFHLFSQVVDALIMIKNDHWDETQQQKQFFTHFLPFKEFSEEFENAIEACRENNLDLILLYKNYLSKTTAFKNLERILLTKFSAIVSPVHEKHYTLVNTWLTNLIQKLVKHPEDTNAFINDYVLKNPLNHFICLNKKEKQSIALLLNKKRMSMLKDVEIEKNGFVQLQAFIENIGEAPANYLDPENARKVNVEEVSEKDIPTLSTDKVSIPNESMFTSNKKHSIEKLIHAKLKAILSTMGQRLTRIIQENYNNIAAGFLPVNDLNNLFAYLVKLYFDVYSITINGFVVENELIKNIEQIYDNTQYLRFGLTRFNMQNLTPFTISVRKMFLDFFLSQKTLIDRAEEIIENLEFKSVTPEGKQKLATKNMLREQLEQLNAMDVDDTINLKTDTLTHQVLFSDQELRMIQDFILQLSIHNIPSINFVKSLKLHIILEKRPDILLALQEKVQNILYFYFQDLVNEIPAQENVLSTMLFIIELFPADSRIHLLETGYISRHIVKKWLNMKSLQDAEDLIRFININKEQLGKFEHQPFGKEIQKLIEKIHLFYKQKVIEYQEDVWSEMAKNIILTSPSELSQFLASAPTQRIIQKHKNNLDQKLLIHMENQAKQAMEDDKKRVACSKINLERHLNDLLLLLKDRQFASIQASVLIVCENIFKTIPDDNLIIQFSHALLSVLLDIEKDLKSYSSEILEKILINRPLETSRLLVFKDAYGNLKEFLNALKQSLFATADVQNKADFLIQILDFTYKFRHKTNKGKLLHSIYNEDFKLYEETLTELRKKATDAKESLTKLFKASEQKIELSRTIPLKEIYLNIETVNFQGYGNVVFRESAFKRAIEVEIKNYEMKLNDLIKHFNSHLKTKIDHIQILNLSFDNKWKDFVSKSKISFPPELTISSQELIKDPIKVITETLNKASNDLAYVISEKILKWLIVFVKELNTFFVATMSEFGEVIPFDYKHFRALEYEINSKYIEIENKIICNEIIENTDNIEKLSTLIKQIDPNRIAGGKQKFQDYLSKILTAETNQQQTRYKEQLKKQYFDLLDNIAHFRFAFDFNHQQNLILKLKDKFKTLRTDTVFERFPNLDDTFVSSMNVENFLQALEALSHFVQAAQNFLQNVLTEQADLFPQTNFIPVELSTVKTIPKSDINLRMKIHTPQTFFQVDSVFNTQLIVDEKGIPVQFYNVFHNIVFKFFALNYKKIIVPDKVLNLVSTKYKILTTLKSILSVVKSFWKEIINFDLTSYFQGKAEFTFQNVFPIINLKIFIYIITQAWSVTSDETQHSFELPLEKFSLLIIANNPEFLFGSLQCPVDLAINSLIPLLEKKKYFTAFTISDNPPKLSMDELKIVCLDLNTWSEITLEKYTFKKNSLMQLCMGKEKFFIYLLSALVLPQNFLNYIWIQYKPSCCAQDSFQQLIQDLCFEYTHQNHIKPISLNLQEPNALKHGERILSKFVLEKNANTSLFSIFLGKQFLLDYLLFSYLTATEMTFSYYVDSIKNFLLTIRHLENVQQNVDFRTILQSRNFDLKYLLTQSWTQNVLEQSIFHVQLDKIIADIKQPQLSLKKIPLVLFNGDNEVVSTYVPPEQASQTEQSFRIKNIFPNPVQEYSSKNVILFTNYPKNTKFLFNSPPPKTAAKSYKLPDTTDDINTETLSSPTIQRIPIKGLVPKENEIVFLPEKNTAHTDSKETKTHLIDTFNILSQTKGEIKTFSTDFDQTISKLKHLYF.

A deubiquitination activity region spans residues 1–230 (MRIIAGSTNQ…PDIALSLNDF (230 aa)). Residues 3–220 (IIAGSTNQND…TILILKTYKD (218 aa)) enclose the Peptidase C76 domain. Active-site residues include Cys23, Asp155, and His157. Residues 245–272 (TNTLISKQSPSKRKQEKTSLNSNSLEKK) are disordered. A region of interest (interaction with inner tegument protein) is located at residue Ser278.

This sequence belongs to the herpesviridae large tegument protein family. Interacts with host CUL1 and CUL4A; these interactions inhibit the E3 ligase activity of cullins. Interacts with inner tegument protein. Interacts with capsid vertex specific component CVC2. Interacts with the major capsid protein/MCP.

It localises to the virion tegument. The protein resides in the host cytoplasm. The protein localises to the host nucleus. It catalyses the reaction Thiol-dependent hydrolysis of ester, thioester, amide, peptide and isopeptide bonds formed by the C-terminal Gly of ubiquitin (a 76-residue protein attached to proteins as an intracellular targeting signal).. Functionally, large tegument protein that plays multiple roles in the viral cycle. During viral entry, remains associated with the capsid while most of the tegument is detached and participates in the capsid transport toward the host nucleus. Plays a role in the routing of the capsid at the nuclear pore complex and subsequent uncoating. Within the host nucleus, acts as a deneddylase and promotes the degradation of nuclear CRLs (cullin-RING ubiquitin ligases) and thereby stabilizes nuclear CRL substrates, while cytoplasmic CRLs remain unaffected. These modifications prevent host cell cycle S-phase progression and create a favorable environment allowing efficient viral genome replication. Participates later in the secondary envelopment of capsids. Indeed, plays a linker role for the association of the outer viral tegument to the capsids together with the inner tegument protein. In Human herpesvirus 7 (strain JI) (HHV-7), this protein is Large tegument protein deneddylase (U31).